Consider the following 340-residue polypeptide: ATPase GET3 (340 aa).

35 to 42 contributes to the ATP binding site; that stretch reads KGGVGKTT. D64 is a catalytic residue. ATP-binding residues include E245 and N272. Residues C283 and C286 each contribute to the Zn(2+) site.

It belongs to the arsA ATPase family. In terms of assembly, homodimer.

It is found in the cytoplasm. The protein resides in the endoplasmic reticulum. Its function is as follows. ATPase required for the post-translational delivery of tail-anchored (TA) proteins to the endoplasmic reticulum. Recognizes and selectively binds the transmembrane domain of TA proteins in the cytosol. This complex then targets to the endoplasmic reticulum by membrane-bound receptors, where the tail-anchored protein is released for insertion. This process is regulated by ATP binding and hydrolysis. ATP binding drives the homodimer towards the closed dimer state, facilitating recognition of newly synthesized TA membrane proteins. ATP hydrolysis is required for insertion. Subsequently, the homodimer reverts towards the open dimer state, lowering its affinity for the membrane-bound receptor, and returning it to the cytosol to initiate a new round of targeting. The sequence is that of ATPase GET3 from Chaetomium globosum (strain ATCC 6205 / CBS 148.51 / DSM 1962 / NBRC 6347 / NRRL 1970) (Soil fungus).